The primary structure comprises 221 residues: Sugar transporter SWEET1 (221 aa).

The next 7 helical transmembrane spans lie at 3–23, 42–62, 68–88, 96–116, 126–146, 160–180, and 186–206; these read AGGF…LGMF, VQFL…SYGA, ILIV…LAYL, VVLL…GYFW, LQLL…SPLA, LSYP…LYGF, and YIMV…WLFW. A MtN3/slv 1 domain is found at 10-94; that stretch reads LIYGACVVFT…LAYLHYCPRK (85 aa). Positions 127–212 constitute a MtN3/slv 2 domain; the sequence is QLLGLFCSVF…WLFWKYPQEQ (86 aa). A mediates interaction with TRPV2 region spans residues 149 to 221; the sequence is AKVIQTKSTQ…QDRNYWFLQT (73 aa).

Belongs to the SWEET sugar transporter family. As to quaternary structure, interacts with TRPV2; the interaction probably occurs intracellularly and depends on TRPV2 N-glycosylation.

The protein resides in the golgi apparatus membrane. It is found in the cell membrane. Its function is as follows. Mediates sugar transport across membranes. May stimulate V(D)J recombination by the activation of RAG1. This is Sugar transporter SWEET1 (SLC50A1) from Papio anubis (Olive baboon).